Reading from the N-terminus, the 111-residue chain is Small ribosomal subunit protein bS16 (111 aa).

This sequence belongs to the bacterial ribosomal protein bS16 family.

This Rickettsia bellii (strain OSU 85-389) protein is Small ribosomal subunit protein bS16.